We begin with the raw amino-acid sequence, 83 residues long: Neurotoxin LmNaTx3 (83 aa).

A signal peptide spans 1-21; the sequence is MQLKIQLLMLVLMIVLTDVYS. The LCN-type CS-alpha/beta domain maps to 22–83; the sequence is KDGFIVSKKN…NIAMKNKNYC (62 aa). Intrachain disulfides connect C32/C83, C36/C59, C45/C64, and C49/C66.

This sequence belongs to the long (4 C-C) scorpion toxin superfamily. Sodium channel inhibitor family. Alpha subfamily. In terms of tissue distribution, expressed by the venom gland.

It is found in the secreted. Binds voltage-independently at site-3 of voltage-gated sodium channels (Nav) and inhibits the inactivation of the activated channels, thereby blocking neuronal transmission. The polypeptide is Neurotoxin LmNaTx3 (Lychas mucronatus (Chinese swimming scorpion)).